The following is a 298-amino-acid chain: Acetyl-coenzyme A carboxylase carboxyl transferase subunit beta (298 aa).

Positions 41–298 (PTIECPECHA…RIVSKLMNLP (258 aa)) constitute a CoA carboxyltransferase N-terminal domain. The Zn(2+) site is built by Cys45, Cys48, Cys64, and Cys67. The C4-type zinc-finger motif lies at 45–67 (CPECHALVTRTAIAFNAYVCPSC).

Belongs to the AccD/PCCB family. As to quaternary structure, acetyl-CoA carboxylase is a heterohexamer composed of biotin carboxyl carrier protein (AccB), biotin carboxylase (AccC) and two subunits each of ACCase subunit alpha (AccA) and ACCase subunit beta (AccD). Requires Zn(2+) as cofactor.

The protein localises to the cytoplasm. The enzyme catalyses N(6)-carboxybiotinyl-L-lysyl-[protein] + acetyl-CoA = N(6)-biotinyl-L-lysyl-[protein] + malonyl-CoA. It participates in lipid metabolism; malonyl-CoA biosynthesis; malonyl-CoA from acetyl-CoA: step 1/1. Functionally, component of the acetyl coenzyme A carboxylase (ACC) complex. Biotin carboxylase (BC) catalyzes the carboxylation of biotin on its carrier protein (BCCP) and then the CO(2) group is transferred by the transcarboxylase to acetyl-CoA to form malonyl-CoA. This Acinetobacter baylyi (strain ATCC 33305 / BD413 / ADP1) protein is Acetyl-coenzyme A carboxylase carboxyl transferase subunit beta.